The primary structure comprises 808 residues: Phospholipase D alpha 1 (808 aa).

The C2 domain occupies 1–125 (MAKTLLHGTL…LEGEEVDKWV (125 aa)). Asp186 contributes to the Ca(2+) binding site. The 39-residue stretch at 326 to 364 (TIFTHHQKIVVVDSEMPTSGSENRRVVSFVGGIDLCDGR) folds into the PLD phosphodiesterase 1 domain. Catalysis depends on residues His331, Lys333, and Asp338. His331 is a binding site for a 1,2-diacyl-sn-glycero-3-phosphate. Ca(2+) contacts are provided by His370 and His404. The 28-residue stretch at 654-681 (FMIYVHAKMMIVDDEYIIIGSANINQRS) folds into the PLD phosphodiesterase 2 domain. Catalysis depends on residues His659, Lys661, and Asp666. His659 contacts a 1,2-diacyl-sn-glycero-3-phosphate. Glu720 provides a ligand contact to Ca(2+).

Belongs to the phospholipase D family. C2-PLD subfamily. Ca(2+) is required as a cofactor.

It catalyses the reaction a 1,2-diacyl-sn-glycero-3-phosphocholine + H2O = a 1,2-diacyl-sn-glycero-3-phosphate + choline + H(+). Its function is as follows. Hydrolyzes glycerol-phospholipids at the terminal phosphodiesteric bond. Plays an important role in various cellular processes. The polypeptide is Phospholipase D alpha 1 (PLD1) (Spuriopimpinella brachycarpa (Chamnamul)).